Consider the following 424-residue polypeptide: Probable serine/threonine-protein kinase PBL12 (424 aa).

Positions 88-368 (FSRSNMLGEG…CEVVKVLESI (281 aa)) constitute a Protein kinase domain. ATP contacts are provided by residues 94-102 (LGEGGFGPV) and Lys-123. Asp-218 functions as the Proton acceptor in the catalytic mechanism.

Belongs to the protein kinase superfamily. Ser/Thr protein kinase family. As to expression, expressed specifically in roots.

The protein resides in the cell membrane. It catalyses the reaction L-seryl-[protein] + ATP = O-phospho-L-seryl-[protein] + ADP + H(+). The enzyme catalyses L-threonyl-[protein] + ATP = O-phospho-L-threonyl-[protein] + ADP + H(+). May play a role in the signal transduction pathway of osmotic stress. May be involved in plant defense signaling. This Arabidopsis thaliana (Mouse-ear cress) protein is Probable serine/threonine-protein kinase PBL12.